A 512-amino-acid chain; its full sequence is ADP,ATP carrier protein 4 (512 aa).

Transmembrane regions (helical) follow at residues 34 to 54 (ISKFLFITLLMFCILFIQNLI), 71 to 91 (ISFLKFWGVMPSAFLITVMYV), 102 to 122 (IFYLIISIFLIFFALFAYVIF), 157 to 177 (FSLFYIIAELWPNVVFALLFW), 192 to 212 (FYPLFGLLSQTGIYLAGHFLE), 231 to 251 (FHTLSIQIILTIVLILGIVSI), 296 to 316 (LIATLLICYGIAINLVEGPWK), 330 to 350 (AAFIGSYLSYTGVFTIFFVLL), 361 to 381 (FTSAVITPSIVFITGILFFAF), 390 to 410 (LIIANFILTDPALVAITIGAI), 448 to 468 (VIGTKLGKSGSAFLQSLIFII), and 476 to 496 (SISICLMIIFILTCLTWIWAT).

Belongs to the ADP/ATP translocase tlc family.

Its subcellular location is the cell membrane. Functionally, provides the rickettsial cell with host ATP in exchange for rickettsial ADP. This is an obligate exchange system. This energy acquiring activity is an important component of rickettsial parasitism. The sequence is that of ADP,ATP carrier protein 4 (tlcD) from Rickettsia typhi (strain ATCC VR-144 / Wilmington).